The chain runs to 223 residues: Large ribosomal subunit protein bL25 (223 aa).

It belongs to the bacterial ribosomal protein bL25 family. CTC subfamily. Part of the 50S ribosomal subunit; part of the 5S rRNA/L5/L18/L25 subcomplex. Contacts the 5S rRNA. Binds to the 5S rRNA independently of L5 and L18.

Its function is as follows. This is one of the proteins that binds to the 5S RNA in the ribosome where it forms part of the central protuberance. This is Large ribosomal subunit protein bL25 from Albidiferax ferrireducens (strain ATCC BAA-621 / DSM 15236 / T118) (Rhodoferax ferrireducens).